The sequence spans 418 residues: Gamma-glutamyl phosphate reductase (418 aa).

This sequence belongs to the gamma-glutamyl phosphate reductase family.

Its subcellular location is the cytoplasm. The catalysed reaction is L-glutamate 5-semialdehyde + phosphate + NADP(+) = L-glutamyl 5-phosphate + NADPH + H(+). It participates in amino-acid biosynthesis; L-proline biosynthesis; L-glutamate 5-semialdehyde from L-glutamate: step 2/2. Its function is as follows. Catalyzes the NADPH-dependent reduction of L-glutamate 5-phosphate into L-glutamate 5-semialdehyde and phosphate. The product spontaneously undergoes cyclization to form 1-pyrroline-5-carboxylate. The protein is Gamma-glutamyl phosphate reductase of Lacticaseibacillus casei (strain BL23) (Lactobacillus casei).